The following is a 647-amino-acid chain: Threonine--tRNA ligase (647 aa).

In terms of domain architecture, TGS spans 1-61 (MINITFPDGA…TEDGSIEIVT (61 aa)). The interval 242–540 (DHRKLGKELD…LIENYKGAFP (299 aa)) is catalytic. Zn(2+) is bound by residues Cys336, His387, and His517.

It belongs to the class-II aminoacyl-tRNA synthetase family. Homodimer. The cofactor is Zn(2+).

It is found in the cytoplasm. The catalysed reaction is tRNA(Thr) + L-threonine + ATP = L-threonyl-tRNA(Thr) + AMP + diphosphate + H(+). Functionally, catalyzes the attachment of threonine to tRNA(Thr) in a two-step reaction: L-threonine is first activated by ATP to form Thr-AMP and then transferred to the acceptor end of tRNA(Thr). Also edits incorrectly charged L-seryl-tRNA(Thr). The protein is Threonine--tRNA ligase of Streptococcus pneumoniae (strain ATCC 700669 / Spain 23F-1).